The primary structure comprises 89 residues: Chromosomal protein MC1a (89 aa).

Functionally, protects DNA against thermal denaturation and modulates transcription. The chain is Chromosomal protein MC1a from Methanothrix soehngenii (Methanosaeta concilii).